We begin with the raw amino-acid sequence, 156 residues long: Persephin (156 aa).

Residues 1-21 (MAAGRLRILFLLLLSLHLGLG) form the signal peptide. Disulfide bonds link C66–C124, C93–C152, and C97–C154.

Belongs to the TGF-beta family. GDNF subfamily. In terms of assembly, homodimer; disulfide-linked. Interacts with GFRA4 coreceptor and RET: forms a 2:2:2 ternary complex composed of PSPN ligand, GFRA4 and RET receptor. In terms of tissue distribution, expressed at low levels in substantia nigra. Cochlea.

Its subcellular location is the secreted. In terms of biological role, growth factor that exhibits neurotrophic activity on mesencephalic dopaminergic and motor neurons. Acts by binding to its coreceptor, GFRA4, leading to autophosphorylation and activation of the RET receptor. In Rattus norvegicus (Rat), this protein is Persephin.